The sequence spans 550 residues: CTP synthase (550 aa).

The tract at residues 1-270 (MTKYVFVTGG…DRIICEELKL (270 aa)) is amidoligase domain. Ser13 lines the CTP pocket. Residue Ser13 participates in UTP binding. ATP contacts are provided by residues 14 to 19 (SLGKGI) and Asp71. Mg(2+)-binding residues include Asp71 and Glu144. CTP contacts are provided by residues 151-153 (DIE), 191-196 (KTKPTQ), and Lys227. Residues 191 to 196 (KTKPTQ) and Lys227 each bind UTP. The region spanning 295–547 (TIGMVGKYVD…VEAALANKQA (253 aa)) is the Glutamine amidotransferase type-1 domain. Residue Gly356 participates in L-glutamine binding. Cys383 acts as the Nucleophile; for glutamine hydrolysis in catalysis. Residues 384 to 387 (LGMQ), Glu407, and Arg473 contribute to the L-glutamine site. Catalysis depends on residues His520 and Glu522.

It belongs to the CTP synthase family. As to quaternary structure, homotetramer.

It carries out the reaction UTP + L-glutamine + ATP + H2O = CTP + L-glutamate + ADP + phosphate + 2 H(+). It catalyses the reaction L-glutamine + H2O = L-glutamate + NH4(+). The enzyme catalyses UTP + NH4(+) + ATP = CTP + ADP + phosphate + 2 H(+). It functions in the pathway pyrimidine metabolism; CTP biosynthesis via de novo pathway; CTP from UDP: step 2/2. Allosterically activated by GTP, when glutamine is the substrate; GTP has no effect on the reaction when ammonia is the substrate. The allosteric effector GTP functions by stabilizing the protein conformation that binds the tetrahedral intermediate(s) formed during glutamine hydrolysis. Inhibited by the product CTP, via allosteric rather than competitive inhibition. Functionally, catalyzes the ATP-dependent amination of UTP to CTP with either L-glutamine or ammonia as the source of nitrogen. Regulates intracellular CTP levels through interactions with the four ribonucleotide triphosphates. This is CTP synthase from Burkholderia lata (strain ATCC 17760 / DSM 23089 / LMG 22485 / NCIMB 9086 / R18194 / 383).